Here is a 437-residue protein sequence, read N- to C-terminus: Adenylosuccinate synthetase (437 aa).

GTP is bound by residues glycine 12–lysine 18 and glycine 40–threonine 42. Aspartate 13 (proton acceptor) is an active-site residue. Mg(2+)-binding residues include aspartate 13 and glycine 40. IMP-binding positions include aspartate 13–lysine 16, asparagine 38–histidine 41, threonine 128, arginine 142, glutamine 223, threonine 238, and arginine 302. The active-site Proton donor is the histidine 41. Threonine 298–arginine 304 contributes to the substrate binding site. GTP-binding positions include arginine 304, lysine 330–aspartate 332, and serine 412–glycine 414.

This sequence belongs to the adenylosuccinate synthetase family. Homodimer. The cofactor is Mg(2+).

It is found in the cytoplasm. It carries out the reaction IMP + L-aspartate + GTP = N(6)-(1,2-dicarboxyethyl)-AMP + GDP + phosphate + 2 H(+). The protein operates within purine metabolism; AMP biosynthesis via de novo pathway; AMP from IMP: step 1/2. In terms of biological role, plays an important role in the de novo pathway of purine nucleotide biosynthesis. Catalyzes the first committed step in the biosynthesis of AMP from IMP. This is Adenylosuccinate synthetase from Parasynechococcus marenigrum (strain WH8102).